A 258-amino-acid polypeptide reads, in one-letter code: uncharacterized protein (258 aa).

The next 7 membrane-spanning stretches (helical) occupy residues 8-28 (VFLA…IVWF), 38-58 (VFFI…GGVH), 70-90 (EAMQ…GIFE), 121-141 (LEAI…AFAI), 176-196 (LGGI…LLVL), 204-224 (PLFL…AVLY), and 231-251 (HAAA…YWIV).

It localises to the cell membrane. This is an uncharacterized protein from Bacillus subtilis (strain 168).